The following is a 633-amino-acid chain: MALRFPPRLLSQLKLSRRLNSLPAPVSEDSEDESLKFPSNDLLLRTSSNDLEGSYIPADRRFYNTLLKKCTVFKLLIQGRIVHAHILQSIFRHDIVMGNTLLNMYAKCGSLEEARKVFEKMPQRDFVTWTTLISGYSQHDRPCDALLFFNQMLRFGYSPNEFTLSSVIKAAAAERRGCCGHQLHGFCVKCGFDSNVHVGSALLDLYTRYGLMDDAQLVFDALESRNDVSWNALIAGHARRSGTEKALELFQGMLRDGFRPSHFSYASLFGACSSTGFLEQGKWVHAYMIKSGEKLVAFAGNTLLDMYAKSGSIHDARKIFDRLAKRDVVSWNSLLTAYAQHGFGKEAVWWFEEMRRVGIRPNEISFLSVLTACSHSGLLDEGWHYYELMKKDGIVPEAWHYVTVVDLLGRAGDLNRALRFIEEMPIEPTAAIWKALLNACRMHKNTELGAYAAEHVFELDPDDPGPHVILYNIYASGGRWNDAARVRKKMKESGVKKEPACSWVEIENAIHMFVANDERHPQREEIARKWEEVLAKIKELGYVPDTSHVIVHVDQQEREVNLQYHSEKIALAFALLNTPPGSTIHIKKNIRVCGDCHTAIKLASKVVGREIIVRDTNRFHHFKDGNCSCKDYW.

The N-terminal 63 residues, 1 to 63 (MALRFPPRLL…SYIPADRRFY (63 aa)), are a transit peptide targeting the mitochondrion. 10 PPR repeats span residues 94-124 (DIVM…MPQR), 125-159 (DFVT…GYSP), 160-194 (NEFT…GFDS), 195-225 (NVHV…LESR), 226-260 (NDVS…GFRP), 261-295 (SHFS…GEKL), 296-326 (VAFA…LAKR), 327-361 (DVVS…GIRP), 362-396 (NEIS…GIVP), and 397-431 (EAWH…PTAA). Positions 432–507 (IWKALLNACR…EPACSWVEIE (76 aa)) are type E motif. The interval 508 to 538 (NAIHMFVANDERHPQREEIARKWEEVLAKIK) is type E(+) motif. The tract at residues 539–633 (ELGYVPDTSH…DGNCSCKDYW (95 aa)) is type DYW motif.

Belongs to the PPR family. PCMP-H subfamily.

It localises to the mitochondrion. This Arabidopsis thaliana (Mouse-ear cress) protein is Pentatricopeptide repeat-containing protein At3g24000, mitochondrial (PCMP-H87).